Consider the following 415-residue polypeptide: MQLTAVGLNHQTAPLSIREKLAFAAAALPKAVRNLARSNAATEAVILSTCNRTELYCVGDSEEIIRWLADYHSLPIEEIRPYLYALDMQETVRHAFRVACGLDSMVLGEPQILGQIKDAVRVAQEQESMGKKLNALFQKTFSVAKEVRTDTAVGENSVSMASASVKLAEQIFPDIGDLNVLFIGAGEMIELVATYFAAKSPRLMTVANRTLARAQELCDKLGVNAEPCLLSDLPAILHDYDVVVSSTASQLPIVGKGMVERALKQRQSMPLFMLDLAVPRDIEAEVGDLNDAYLYTVDDMVNIVQSGKEARQKAAAAAETLVSEKVAEFVRQQQGRQSVPLIKALRDEGEKARKQVLENAMKQLAKGATAEEVLERLSVQLTNKLLHSPTQTLNKAGEEDKDLVHAVAQIYHLDK.

Substrate is bound by residues 49 to 52 (TCNR), Ser104, 109 to 111 (EPQ), and Gln115. The active-site Nucleophile is Cys50. Residue 184-189 (GAGEMI) coordinates NADP(+).

The protein belongs to the glutamyl-tRNA reductase family. In terms of assembly, homodimer.

It carries out the reaction (S)-4-amino-5-oxopentanoate + tRNA(Glu) + NADP(+) = L-glutamyl-tRNA(Glu) + NADPH + H(+). The protein operates within porphyrin-containing compound metabolism; protoporphyrin-IX biosynthesis; 5-aminolevulinate from L-glutamyl-tRNA(Glu): step 1/2. In terms of biological role, catalyzes the NADPH-dependent reduction of glutamyl-tRNA(Glu) to glutamate 1-semialdehyde (GSA). The sequence is that of Glutamyl-tRNA reductase from Neisseria meningitidis serogroup B (strain ATCC BAA-335 / MC58).